Here is a 133-residue protein sequence, read N- to C-terminus: MGLTSQLIPTLVCLLACTSNFVHGHKCDITLQEIIKTLNILTARKNSCMELPVTDVFAAPENTTEKETFCRASTVLRHIYRHHTCMKSLLSGLDRNLSSMANMTCSVHEAKKSTLKDFLERLKTIMKEKYSKC.

The first 24 residues, 1-24 (MGLTSQLIPTLVCLLACTSNFVHG), serve as a signal peptide directing secretion. Cystine bridges form between Cys-27–Cys-133, Cys-48–Cys-85, and Cys-70–Cys-105. Asn-62 carries N-linked (GlcNAc...) asparagine glycosylation.

Belongs to the IL-4/IL-13 family.

It localises to the secreted. Its function is as follows. Participates in at least several B-cell activation processes as well as of other cell types. It is a costimulator of DNA-synthesis. It induces the expression of class II MHC molecules on resting B-cells. It enhances both secretion and cell surface expression of IgE and IgG1. It also regulates the expression of the low affinity Fc receptor for IgE (CD23) on both lymphocytes and monocytes. Positively regulates IL31RA expression in macrophages. Stimulates autophagy in dendritic cells by interfering with mTORC1 signaling and through the induction of RUFY4. The protein is Interleukin-4 (IL4) of Sus scrofa (Pig).